Here is a 196-residue protein sequence, read N- to C-terminus: Pyridoxine/pyridoxamine 5'-phosphate oxidase (196 aa).

Lys49 contributes to the substrate binding site. Lys66 and Gln88 together coordinate FMN. Substrate-binding residues include Tyr106, Arg110, and Ser114. Residues Gln123 to Ser124 and Trp168 each bind FMN. Arg174–His176 is a binding site for substrate. Arg178 is a binding site for FMN.

It belongs to the pyridoxamine 5'-phosphate oxidase family. Homodimer. FMN serves as cofactor.

The enzyme catalyses pyridoxamine 5'-phosphate + O2 + H2O = pyridoxal 5'-phosphate + H2O2 + NH4(+). It catalyses the reaction pyridoxine 5'-phosphate + O2 = pyridoxal 5'-phosphate + H2O2. The protein operates within cofactor metabolism; pyridoxal 5'-phosphate salvage; pyridoxal 5'-phosphate from pyridoxamine 5'-phosphate: step 1/1. Its pathway is cofactor metabolism; pyridoxal 5'-phosphate salvage; pyridoxal 5'-phosphate from pyridoxine 5'-phosphate: step 1/1. Its function is as follows. Catalyzes the oxidation of either pyridoxine 5'-phosphate (PNP) or pyridoxamine 5'-phosphate (PMP) into pyridoxal 5'-phosphate (PLP). This is Pyridoxine/pyridoxamine 5'-phosphate oxidase from Bdellovibrio bacteriovorus (strain ATCC 15356 / DSM 50701 / NCIMB 9529 / HD100).